A 173-amino-acid chain; its full sequence is Protein FAM180A (173 aa).

Residues 1 to 17 (MSWKALTILLVFSSTQA) form the signal peptide.

The protein belongs to the FAM180 family.

The protein resides in the secreted. This is Protein FAM180A (Fam180a) from Mus musculus (Mouse).